Here is a 503-residue protein sequence, read N- to C-terminus: UDP-N-acetylmuramate--L-alanine ligase (503 aa).

Positions 1–22 (MIKQTHVSNSSNNSTNSTAAQV) are disordered. A compositionally biased stretch (low complexity) spans 8-18 (SNSSNNSTNST). ATP is bound at residue 135–141 (GTHGKTT).

Belongs to the MurCDEF family.

It localises to the cytoplasm. It carries out the reaction UDP-N-acetyl-alpha-D-muramate + L-alanine + ATP = UDP-N-acetyl-alpha-D-muramoyl-L-alanine + ADP + phosphate + H(+). It functions in the pathway cell wall biogenesis; peptidoglycan biosynthesis. Cell wall formation. The sequence is that of UDP-N-acetylmuramate--L-alanine ligase from Colwellia psychrerythraea (strain 34H / ATCC BAA-681) (Vibrio psychroerythus).